The sequence spans 210 residues: NAD(P)H-quinone oxidoreductase subunit I (210 aa).

4Fe-4S ferredoxin-type domains lie at 54–83 (GRIH…VDWV) and 94–123 (YSYS…VTED). [4Fe-4S] cluster-binding residues include Cys63, Cys66, Cys69, Cys73, Cys103, Cys106, Cys109, and Cys113.

The protein belongs to the complex I 23 kDa subunit family. In terms of assembly, NDH-1 is composed of at least 11 different subunits. [4Fe-4S] cluster serves as cofactor.

It is found in the cellular thylakoid membrane. It catalyses the reaction a plastoquinone + NADH + (n+1) H(+)(in) = a plastoquinol + NAD(+) + n H(+)(out). The enzyme catalyses a plastoquinone + NADPH + (n+1) H(+)(in) = a plastoquinol + NADP(+) + n H(+)(out). Its function is as follows. NDH-1 shuttles electrons from an unknown electron donor, via FMN and iron-sulfur (Fe-S) centers, to quinones in the respiratory and/or the photosynthetic chain. The immediate electron acceptor for the enzyme in this species is believed to be plastoquinone. Couples the redox reaction to proton translocation, and thus conserves the redox energy in a proton gradient. The polypeptide is NAD(P)H-quinone oxidoreductase subunit I (Synechococcus sp. (strain JA-3-3Ab) (Cyanobacteria bacterium Yellowstone A-Prime)).